Consider the following 118-residue polypeptide: Cytochrome b-c1 complex subunit 7 (118 aa).

The segment at 1–32 is igE-binding. Immunodominant epitope; induces specific IgE antibody production in mice. Causes degranulation of rat basophilic leukemia (RBL) cells and the release of beta-hexosaminidase from them; that stretch reads MVHLTKTLRFINNPGFRKFYYGLQGYNKYGLY.

Belongs to the UQCRB/QCR7 family. In terms of assembly, component of the ubiquinol-cytochrome c oxidoreductase (cytochrome b-c1 complex, complex III, CIII), a multisubunit enzyme composed of 3 respiratory subunits cytochrome b, cytochrome c1 and Rieske protein, 2 core protein subunits, and additional low-molecular weight protein subunits. The complex exists as an obligatory dimer and forms supercomplexes (SCs) in the inner mitochondrial membrane with cytochrome c oxidase (complex IV, CIV).

Its subcellular location is the mitochondrion inner membrane. Component of the ubiquinol-cytochrome c oxidoreductase, a multisubunit transmembrane complex that is part of the mitochondrial electron transport chain which drives oxidative phosphorylation. The respiratory chain contains 3 multisubunit complexes succinate dehydrogenase (complex II, CII), ubiquinol-cytochrome c oxidoreductase (cytochrome b-c1 complex, complex III, CIII) and cytochrome c oxidase (complex IV, CIV), that cooperate to transfer electrons derived from NADH and succinate to molecular oxygen, creating an electrochemical gradient over the inner membrane that drives transmembrane transport and the ATP synthase. The cytochrome b-c1 complex catalyzes electron transfer from ubiquinol to cytochrome c, linking this redox reaction to translocation of protons across the mitochondrial inner membrane, with protons being carried across the membrane as hydrogens on the quinol. In the process called Q cycle, 2 protons are consumed from the matrix, 4 protons are released into the intermembrane space and 2 electrons are passed to cytochrome c. This is Cytochrome b-c1 complex subunit 7 from Dermatophagoides pteronyssinus (European house dust mite).